Here is a 527-residue protein sequence, read N- to C-terminus: Acyl-coenzyme A thioesterase 4, mitochondrial (527 aa).

The N-terminal 75 residues, 1–75 (MMTPIGIRIR…FLFDPPPIRF (75 aa)), are a transit peptide targeting the mitochondrion. 2 HotDog ACOT-type domains span residues 172–294 (ILYN…RDSK) and 370–487 (KDTC…GPEA).

The protein belongs to the acyl coenzyme A hydrolase family. Mostly expressed at low levels in glandular trichomes (lupulin glands), and, to a lower extent, in stems, leaves, flowers and cones.

It localises to the mitochondrion. The catalysed reaction is 2-methylpropanoyl-CoA + H2O = 2-methylpropanoate + CoA + H(+). It catalyses the reaction propanoyl-CoA + H2O = propanoate + CoA + H(+). It carries out the reaction octanoyl-CoA + H2O = octanoate + CoA + H(+). The enzyme catalyses butanoyl-CoA + H2O = butanoate + CoA + H(+). The catalysed reaction is 3-methylbutanoyl-CoA + H2O = 3-methylbutanoate + CoA + H(+). It catalyses the reaction 2-methylbutanoyl-CoA + H2O = 2-methylbutanoate + CoA + H(+). Its function is as follows. Acyl-CoA thioesterases are a group of enzymes that catalyze the hydrolysis of acyl-CoAs to the free fatty acid and coenzyme A (CoASH), providing the potential to regulate intracellular levels of acyl-CoAs, free fatty acids and CoASH. Active on acyl CoAs with short chains (propanoyl-CoA and butanoyl-CoA), branched short chains (2-methylpropanoyl-CoA, 2-methylbutanoyl-CoA and 3-methylbutanoyl-CoA) and medium chains (octanoyl-CoA). The protein is Acyl-coenzyme A thioesterase 4, mitochondrial of Humulus lupulus (European hop).